Consider the following 228-residue polypeptide: RNA-free ribonuclease P (228 aa).

This sequence belongs to the HARP family.

The catalysed reaction is Endonucleolytic cleavage of RNA, removing 5'-extranucleotides from tRNA precursor.. In terms of biological role, RNA-free RNase P that catalyzes the removal of the 5'-leader sequence from pre-tRNA to produce the mature 5'-terminus. The sequence is that of RNA-free ribonuclease P from Methanopyrus kandleri (strain AV19 / DSM 6324 / JCM 9639 / NBRC 100938).